Consider the following 84-residue polypeptide: Transcription elongation factor 1 homolog (84 aa).

The Zn(2+) site is built by C26, C29, C50, and C53.

The protein belongs to the ELOF1 family.

It localises to the nucleus. Its function is as follows. Transcription elongation factor implicated in the maintenance of proper chromatin structure in actively transcribed regions. This chain is Transcription elongation factor 1 homolog, found in Caenorhabditis elegans.